We begin with the raw amino-acid sequence, 430 residues long: Glucose-6-phosphate isomerase (430 aa).

E284 functions as the Proton donor in the catalytic mechanism. Active-site residues include H305 and K420.

It belongs to the GPI family.

Its subcellular location is the cytoplasm. The catalysed reaction is alpha-D-glucose 6-phosphate = beta-D-fructose 6-phosphate. The protein operates within carbohydrate biosynthesis; gluconeogenesis. It participates in carbohydrate degradation; glycolysis; D-glyceraldehyde 3-phosphate and glycerone phosphate from D-glucose: step 2/4. Functionally, catalyzes the reversible isomerization of glucose-6-phosphate to fructose-6-phosphate. The polypeptide is Glucose-6-phosphate isomerase (Mycoplasma pneumoniae (strain ATCC 29342 / M129 / Subtype 1) (Mycoplasmoides pneumoniae)).